Consider the following 359-residue polypeptide: Chondroadherin (359 aa).

Residues 1–22 (MVRPMLLLSLGLLAGLLPALAA) form the signal peptide. A disulfide bridge links Cys-23 with Cys-38. Residues 23–52 (CPQNCHCHSDLQHVICDKVGLQKIPKVSEK) enclose the LRRNT domain. 9 LRR repeats span residues 76-97 (NLVS…AFRG), 100-121 (QLIY…AFDD), 124-145 (ELTY…LLSP), 148-169 (NLFI…AFQG), 172-193 (DLRW…ALDD), 196-217 (NLAK…ALSK), 220-241 (VVEE…AFQS), 245-266 (YLET…AFLG), and 269-290 (TLKH…FPFD). O-linked (GalNAc...) serine glycosylation is present at Ser-144. The LRRCT domain occupies 300-348 (NPWKCTCQLRGLRRWLEAKASRPDATCASPAKFKGQHIRDTDAFRSCKF). 2 cysteine pairs are disulfide-bonded: Cys-304-Cys-346 and Cys-306-Cys-326.

Belongs to the small leucine-rich proteoglycan (SLRP) family. SLRP class IV subfamily. In terms of assembly, mostly monomeric. Interacts with collagen type II. Present in chondrocytes at all ages.

The protein resides in the secreted. Its subcellular location is the extracellular space. It localises to the extracellular matrix. Promotes attachment of chondrocytes, fibroblasts, and osteoblasts. This binding is mediated (at least for chondrocytes and fibroblasts) by the integrin alpha(2)beta(1). May play an important role in the regulation of chondrocyte growth and proliferation. The protein is Chondroadherin (CHAD) of Homo sapiens (Human).